A 408-amino-acid chain; its full sequence is DNA primase DnaG (408 aa).

In terms of domain architecture, Toprim spans 165 to 243; that stretch reads PELIIVEGRA…KIDYVARAPT (79 aa). Residues glutamate 171, aspartate 216, and aspartate 218 each coordinate Mg(2+).

It belongs to the archaeal DnaG primase family. As to quaternary structure, forms a ternary complex with MCM helicase and DNA. Component of the archaeal exosome complex. Mg(2+) is required as a cofactor.

The catalysed reaction is ssDNA + n NTP = ssDNA/pppN(pN)n-1 hybrid + (n-1) diphosphate.. Functionally, RNA polymerase that catalyzes the synthesis of short RNA molecules used as primers for DNA polymerase during DNA replication. Also part of the exosome, which is a complex involved in RNA degradation. Acts as a poly(A)-binding protein that enhances the interaction between heteromeric, adenine-rich transcripts and the exosome. This chain is DNA primase DnaG, found in Sulfurisphaera tokodaii (strain DSM 16993 / JCM 10545 / NBRC 100140 / 7) (Sulfolobus tokodaii).